We begin with the raw amino-acid sequence, 183 residues long: Capsid protein (183 aa).

Positions 136–183 (NAPILSTLPETTVVRRRGRSPRRRTPSPRRRRSQSPRRRRSQSRESQC) are disordered. The segment covering 149 to 176 (VRRRGRSPRRRTPSPRRRRSQSPRRRRS) has biased composition (basic residues). A phosphoserine; by host mark is found at S155, S162, and S170. A 1; half-length repeat occupies 155–161 (SPRRRTP). A 3 X 8 AA repeats of S-P-R-R-R-[PR]-S-Q region spans residues 155-177 (SPRRRTPSPRRRRSQSPRRRRSQ). Residues 158–175 (RRTPSPRRRRSQSPRRRR) carry the Bipartite nuclear localization signal motif. Tandem repeats lie at residues 162-169 (SPRRRRSQ) and 170-177 (SPRRRRSQ). An RNA binding region spans residues 177 to 183 (QSRESQC).

The protein belongs to the orthohepadnavirus core antigen family. As to quaternary structure, homodimerizes, then multimerizes. Interacts with cytosol exposed regions of viral L glycoprotein present in the reticulum-to-Golgi compartment. Interacts with human FLNB. Phosphorylated form interacts with host importin alpha; this interaction depends on the exposure of the NLS, which itself depends upon genome maturation and/or phosphorylation of the capsid protein. Interacts with host NUP153. Phosphorylated by host SRPK1, SRPK2, and maybe protein kinase C or GAPDH. Phosphorylation is critical for pregenomic RNA packaging. Protein kinase C phosphorylation is stimulated by HBx protein and may play a role in transport of the viral genome to the nucleus at the late step during the viral replication cycle.

Its subcellular location is the virion. The protein localises to the host cytoplasm. Functionally, self assembles to form an icosahedral capsid. Most capsids appear to be large particles with an icosahedral symmetry of T=4 and consist of 240 copies of capsid protein, though a fraction forms smaller T=3 particles consisting of 180 capsid proteins. Entering capsids are transported along microtubules to the nucleus. Phosphorylation of the capsid is thought to induce exposure of nuclear localization signal in the C-terminal portion of the capsid protein that allows binding to the nuclear pore complex via the importin (karyopherin-) alpha and beta. Capsids are imported in intact form through the nuclear pore into the nuclear basket, where it probably binds NUP153. Only capsids that contain the mature viral genome can release the viral DNA and capsid protein into the nucleoplasm. Immature capsids get stuck in the basket. Capsids encapsulate the pre-genomic RNA and the P protein. Pre-genomic RNA is reverse-transcribed into DNA while the capsid is still in the cytoplasm. The capsid can then either be directed to the nucleus, providing more genomes for transcription, or bud through the endoplasmic reticulum to provide new virions. In Hepatitis B virus genotype B2 (isolate Indonesia/pIDW420/1988) (HBV-B), this protein is Capsid protein.